The chain runs to 66 residues: Large ribosomal subunit protein bL33 (66 aa).

The protein belongs to the bacterial ribosomal protein bL33 family.

This Synechococcus sp. (strain CC9311) protein is Large ribosomal subunit protein bL33.